The primary structure comprises 652 residues: Maternal embryonic leucine zipper kinase (652 aa).

Positions 13 to 265 (YELHETIGTG…VKHLLSHPWL (253 aa)) constitute a Protein kinase domain. ATP-binding positions include 19 to 27 (IGTGGFAKV) and K42. The Proton acceptor role is filled by D134. T169 is subject to Phosphothreonine; by autocatalysis. S173 carries the phosphoserine; by autocatalysis modification. The interval 284 to 323 (VDEDCVTELSVFYKCSRTSTSRLISEWNYDHITASYLLLH) is UBA-like. The tract at residues 328–652 (HGKPVRLKRP…VEDILSSCKV (325 aa)) is autoinhibitory region. Phosphothreonine is present on residues T415, T450, T452, T482, and T484. The interval 443-492 (FLHPAPWTPTPRRKQNEKKGILTTPNKNSHTKEKNQSKETPTKKPITTGE) is disordered. Residues 472-484 (HTKEKNQSKETPT) show a composition bias toward basic and acidic residues. Phosphoserine is present on residues S499, S506, and S518. In terms of domain architecture, KA1 spans 603–652 (SDFGKVTMQFELEVCQLSKSEMVGIRRQRLKGDAWVYKRLVEDILSSCKV).

Belongs to the protein kinase superfamily. CAMK Ser/Thr protein kinase family. SNF1 subfamily. In terms of processing, autophosphorylated: autophosphorylation of the T-loop at Thr-169 and Ser-173 is required for activation. Phosphorylated by the maturation promoting factor (MPF), composed of cdk1 and a cyclin-B. Also phosphorylated by some MAPK. Phosphorylated during oocyte maturation. Dephosphorylation destabilizes the protein. Post-translationally, degraded when cells exit mitosis.

Its subcellular location is the cell membrane. It carries out the reaction L-seryl-[protein] + ATP = O-phospho-L-seryl-[protein] + ADP + H(+). The enzyme catalyses L-threonyl-[protein] + ATP = O-phospho-L-threonyl-[protein] + ADP + H(+). Activated by autophosphorylation of the T-loop at Thr-169 and Ser-173: in contrast to other members of the SNF1 subfamily, phosphorylation at Thr-169 is not mediated by STK11/LKB1 but via autophosphorylation instead. Its function is as follows. Serine/threonine-protein kinase involved in various processes such as cell cycle regulation, self-renewal of stem cells, apoptosis and splicing regulation. Also plays a role in primitive hematopoiesis, possibly by affecting the expression of genes critical for hematopoiesis. Plays a role in cytokinesis during early development. This Xenopus tropicalis (Western clawed frog) protein is Maternal embryonic leucine zipper kinase (melk).